A 365-amino-acid chain; its full sequence is Tetratricopeptide repeat protein 19, mitochondrial (365 aa).

A mitochondrion-targeting transit peptide spans 1 to 52 (MFRLLRWRLGRTLLRAAGRRCGGCTARLLPERTGDAGTGAERLRTRGAPARG). 4 TPR repeats span residues 127 to 160 (TYTY…LLGG), 220 to 260 (ANTY…CQEI), 269 to 302 (IVLM…AREI), and 308 to 341 (HMVL…AELK).

The protein belongs to the TTC19 family. Binds to the mature mitochondrial complex III dimer, after the incorporation of the Rieske protein UQCRFS1. Interacts with UQCRC1 and UQCRFS1. Interacts with ZFYVE26 and CHMP4B. Proteolytically cleaved by PARL.

Its subcellular location is the mitochondrion inner membrane. Its function is as follows. Required for the preservation of the structural and functional integrity of mitochondrial respiratory complex III by allowing the physiological turnover of the Rieske protein UQCRFS1. Involved in the clearance of UQCRFS1 N-terminal fragments, which are produced upon incorporation into the complex III and whose presence is detrimental for its catalytic activity. This is Tetratricopeptide repeat protein 19, mitochondrial (Ttc19) from Mus musculus (Mouse).